The following is a 3390-amino-acid chain: Genome polyprotein (3390 aa).

Positions 1–15 are interaction with host EXOC1; it reads MNNQRKKTGKPSINM. Residues 1–100 lie on the Cytoplasmic side of the membrane; that stretch reads MNNQRKKTGK…MLSIINKRKK (100 aa). Positions 37-72 are hydrophobic; homodimerization of capsid protein C; it reads LLNGQGPMKLVMAFIAFLRFLAIPPTAGVLARWGTF. Positions 101–114 are cleaved as a propeptide — ER anchor for the capsid protein C, removed in mature form by serine protease NS3; the sequence is TSLCLMMMLPATLA. The chain crosses the membrane as a helical span at residues 101–118; sequence TSLCLMMMLPATLAFHLT. Residues 119 to 243 lie on the Extracellular side of the membrane; that stretch reads SRDGEPRMIV…VEKVETWALR (125 aa). A glycan (N-linked (GlcNAc...) asparagine; by host) is linked at Asn-183. Residues 244–264 traverse the membrane as a helical segment; it reads HPGFTILALFLAHYIGTSLTQ. Position 265 (Lys-265) is a topological domain, cytoplasmic. Residues 266–280 form a helical membrane-spanning segment; it reads VVIFILLMLVTPSMT. At 281-723 the chain is on the extracellular side; it reads MRCVGVGNRD…VHQIFGSAYT (443 aa). Cystine bridges form between Cys-283–Cys-310, Cys-340–Cys-401, Cys-354–Cys-385, and Cys-372–Cys-396. Asn-347 carries an N-linked (GlcNAc...) asparagine; by host glycan. The interval 378 to 391 is fusion peptide; that stretch reads DRGWGNGCGLFGKG. N-linked (GlcNAc...) asparagine; by host glycosylation is present at Asn-433. 2 disulfide bridges follow: Cys-463-Cys-563 and Cys-580-Cys-611. The helical transmembrane segment at 724-744 threads the bilayer; the sequence is ALFSGVSWIMKIGIGVLLTWI. The Cytoplasmic portion of the chain corresponds to 745-750; sequence GLNSKN. Residues 751–771 traverse the membrane as a helical segment; the sequence is TSMSFSCIAIGIITLYLGVVV. At 772-1193 the chain is on the extracellular side; sequence QADMGCVINW…MIGSNASDRM (422 aa). 6 cysteine pairs are disulfide-bonded: Cys-777-Cys-788, Cys-828-Cys-916, Cys-952-Cys-996, Cys-1053-Cys-1102, Cys-1064-Cys-1086, and Cys-1085-Cys-1089. N-linked (GlcNAc...) asparagine; by host glycosylation is found at Asn-903 and Asn-980. N-linked (GlcNAc...) asparagine; by host glycans are attached at residues Asn-1132 and Asn-1188. Residues 1194 to 1218 form a helical membrane-spanning segment; it reads GMGVTYLALIATFKIQPFLALGFFL. The Cytoplasmic portion of the chain corresponds to 1219–1224; the sequence is RKLTSR. Residues 1225-1243 traverse the membrane as a helical segment; it reads ENLLLGVGLAMAATLRLPE. At 1244 to 1267 the chain is on the lumenal side; sequence DIEQMANGIALGLMALKLITQFET. The chain crosses the membrane as a helical span at residues 1268 to 1288; it reads YQLWTALVSLTCSNTIFTLTV. Residue Ala-1289 is a topological domain, cytoplasmic. Residues 1290–1308 form a helical membrane-spanning segment; sequence WRTATLILAGISLLPVCQS. Residues 1309–1315 are Lumenal-facing; it reads SSMRKTD. A helical membrane pass occupies residues 1316 to 1336; it reads WLPMTVAAMGVPPLPLFIFSL. Residues 1337–1344 are Cytoplasmic-facing; it reads KDTLKRRS. The chain crosses the membrane as a helical span at residues 1345–1365; the sequence is WPLNEGVMAVGLVSILASSLL. Residues 1366–1368 are Lumenal-facing; that stretch reads RND. Residues 1369-1389 traverse the membrane as a helical segment; it reads VPMAGPLVAGGLLIACYVITG. The Cytoplasmic segment spans residues 1390–1443; the sequence is TSADLTVEKAADVTWEEEAEQTGVSHNLMITVDDDGTMRIKDDETENILTVLLK. The interval 1396–1435 is interacts with and activates NS3 protease; that stretch reads VEKAADVTWEEEAEQTGVSHNLMITVDDDGTMRIKDDETE. Positions 1444–1464 form an intramembrane region, helical; that stretch reads TALLIVSGIFPCSIPATLLVW. The Cytoplasmic portion of the chain corresponds to 1465–2146; sequence HTWQKQTQRS…VEELPETMET (682 aa). One can recognise a Peptidase S7 domain in the interval 1474–1651; sequence SGVLWDVPSP…NAEPDGPTPE (178 aa). Active-site charge relay system; for serine protease NS3 activity residues include His-1524, Asp-1548, and Ser-1608. In terms of domain architecture, Helicase ATP-binding spans 1654–1810; that stretch reads EEMFKKRNLT…QSNAPIQDEE (157 aa). An important for RNA-binding region spans residues 1658–1661; it reads KKRN. 1667–1674 is an ATP binding site; the sequence is LHPGSGKT. The short motif at 1758-1761 is the DEAH box element; sequence DEAH. One can recognise a Helicase C-terminal domain in the interval 1821–1986; it reads GNEWITDFVG…GIIPALFEPE (166 aa). At Lys-1862 the chain carries N6-acetyllysine; by host. A helical transmembrane segment spans residues 2147 to 2167; the sequence is LLLLGLMILLTGGAMLFLISG. The Lumenal portion of the chain corresponds to 2168–2169; the sequence is KG. Residues 2170 to 2190 constitute an intramembrane region (helical); sequence IGKTSIGLICVIASSGMLWMA. Position 2191 (Asp-2191) is a topological domain, lumenal. The chain crosses the membrane as a helical span at residues 2192-2212; sequence VPLQWIASAIVLEFFMMVLLI. Topologically, residues 2213 to 2227 are cytoplasmic; it reads PEPEKQRTPQDNQLA. Residues 2228 to 2248 form a helical membrane-spanning segment; it reads YVVIGILTLAAIVAANEMGLL. The Lumenal portion of the chain corresponds to 2249-2273; sequence ETTKRDLGMSKEPGVVSPTSYLDVD. The segment at residues 2274-2294 is an intramembrane region (helical); it reads LHPASAWTLYAVATTVITPML. Residues 2295-2305 are Lumenal-facing; that stretch reads RHTIENSTANV. 2 N-linked (GlcNAc...) asparagine; by host glycosylation sites follow: Asn-2300 and Asn-2304. An intramembrane region (helical) is located at residues 2306–2326; it reads SLAAIANQAVVLMGLDKGWPI. Topologically, residues 2327–2346 are lumenal; the sequence is SKMDLGVPLLALGCYSQVNP. A helical transmembrane segment spans residues 2347–2367; the sequence is LTLIAAVLLLVTHYAIIGPGL. Residues 2368–2412 are Cytoplasmic-facing; it reads QAKATREAQKRTAAGIMKNPTVDGIMTIDLDPVIYDSKFEKQLGQ. A helical transmembrane segment spans residues 2413-2433; it reads VMLLVLCAVQLLLMRTSWALC. The Lumenal segment spans residues 2434–2458; it reads EVLTLATGPITTLWEGSPGKFWNTT. Asn-2456 carries an N-linked (GlcNAc...) asparagine; by host glycan. Residues 2459–2479 traverse the membrane as a helical segment; sequence IAVSMANIFRGSYLAGAGLAF. Residues 2480–3390 are Cytoplasmic-facing; that stretch reads SIMKSVGTGK…KEEESEGAIW (911 aa). The region spanning 2492–2753 is the mRNA cap 0-1 NS5-type MT domain; the sequence is TGSQGETLGE…DVDLGAGTRH (262 aa). Ser-2546 is an S-adenosyl-L-methionine binding site. Ser-2546 carries the phosphoserine modification. The For 2'-O-MTase activity role is filled by Lys-2551. Residues 2567-2570 carry the SUMO-interacting motif motif; the sequence is VIDL. S-adenosyl-L-methionine contacts are provided by Gly-2576, Trp-2577, Thr-2594, Lys-2595, Asp-2621, and Val-2622. Residue Asp-2636 is the For 2'-O-MTase activity of the active site. Ile-2637 is a binding site for S-adenosyl-L-methionine. Residues Lys-2670 and Glu-2706 each act as for 2'-O-MTase activity in the active site. An S-adenosyl-L-methionine-binding site is contributed by Tyr-2708. Positions 2927, 2931, 2936, and 2939 each coordinate Zn(2+). Positions 3018 to 3168 constitute a RdRp catalytic domain; that stretch reads AMYADDTAGW…PIDDRFANAL (151 aa). Residues His-3202, Cys-3218, and Cys-3337 each coordinate Zn(2+).

The protein in the N-terminal section; belongs to the class I-like SAM-binding methyltransferase superfamily. mRNA cap 0-1 NS5-type methyltransferase family. As to quaternary structure, homodimer. Interacts (via N-terminus) with host EXOC1 (via C-terminus); this interaction results in EXOC1 degradation through the proteasome degradation pathway. Forms heterodimers with envelope protein E in the endoplasmic reticulum and Golgi. In terms of assembly, homodimer; in the endoplasmic reticulum and Golgi. Interacts with protein prM. Interacts with non-structural protein 1. As to quaternary structure, homodimer; Homohexamer when secreted. Interacts with envelope protein E. Interacts (via N-terminus) with serine protease NS3. In terms of assembly, forms a heterodimer with serine protease NS3. May form homooligomers. As to quaternary structure, forms a heterodimer with NS2B. Interacts with NS4B. Interacts with unphosphorylated RNA-directed RNA polymerase NS5; this interaction stimulates RNA-directed RNA polymerase NS5 guanylyltransferase activity. Interacts with host MAVS; this interaction inhibits the synthesis of IFN-beta. Interacts with host AUP1; the interaction occurs in the presence of Dengue virus NS4B and induces lipophagy which facilitates production of virus progeny particles. In terms of assembly, interacts with serine protease NS3. As to quaternary structure, homodimer. Interacts with host STAT2; this interaction inhibits the phosphorylation of the latter, and, when all viral proteins are present (polyprotein), targets STAT2 for degradation. Interacts with serine protease NS3. Post-translationally, specific enzymatic cleavages in vivo yield mature proteins. Cleavages in the lumen of endoplasmic reticulum are performed by host signal peptidase, whereas cleavages in the cytoplasmic side are performed by serine protease NS3. Signal cleavage at the 2K-4B site requires a prior NS3 protease-mediated cleavage at the 4A-2K site. Cleaved in post-Golgi vesicles by a host furin, releasing the mature small envelope protein M, and peptide pr. This cleavage is incomplete as up to 30% of viral particles still carry uncleaved prM. In terms of processing, N-glycosylated. Post-translationally, N-glycosylated. The excreted form is glycosylated and this is required for efficient secretion of the protein from infected cells. Acetylated by host KAT5. Acetylation modulates NS3 RNA-binding and unwinding activities and plays an important positive role for viral replication. In terms of processing, sumoylation of RNA-directed RNA polymerase NS5 increases NS5 protein stability allowing proper viral RNA replication. Post-translationally, phosphorylated on serines residues. This phosphorylation may trigger NS5 nuclear localization.

The protein localises to the virion. Its subcellular location is the host nucleus. It is found in the host cytoplasm. The protein resides in the host perinuclear region. It localises to the secreted. The protein localises to the virion membrane. Its subcellular location is the host endoplasmic reticulum membrane. It is found in the host mitochondrion. It carries out the reaction Selective hydrolysis of -Xaa-Xaa-|-Yaa- bonds in which each of the Xaa can be either Arg or Lys and Yaa can be either Ser or Ala.. It catalyses the reaction RNA(n) + a ribonucleoside 5'-triphosphate = RNA(n+1) + diphosphate. The enzyme catalyses a ribonucleoside 5'-triphosphate + H2O = a ribonucleoside 5'-diphosphate + phosphate + H(+). The catalysed reaction is ATP + H2O = ADP + phosphate + H(+). It carries out the reaction a 5'-end (5'-triphosphoguanosine)-ribonucleoside in mRNA + S-adenosyl-L-methionine = a 5'-end (N(7)-methyl 5'-triphosphoguanosine)-ribonucleoside in mRNA + S-adenosyl-L-homocysteine. It catalyses the reaction a 5'-end (N(7)-methyl 5'-triphosphoguanosine)-ribonucleoside in mRNA + S-adenosyl-L-methionine = a 5'-end (N(7)-methyl 5'-triphosphoguanosine)-(2'-O-methyl-ribonucleoside) in mRNA + S-adenosyl-L-homocysteine + H(+). Its function is as follows. Plays a role in virus budding by binding to the cell membrane and gathering the viral RNA into a nucleocapsid that forms the core of a mature virus particle. During virus entry, may induce genome penetration into the host cytoplasm after hemifusion induced by the surface proteins. Can migrate to the cell nucleus where it modulates host functions. Overcomes the anti-viral effects of host EXOC1 by sequestering and degrading the latter through the proteasome degradation pathway. In terms of biological role, inhibits RNA silencing by interfering with host Dicer. Functionally, prevents premature fusion activity of envelope proteins in trans-Golgi by binding to envelope protein E at pH6.0. After virion release in extracellular space, gets dissociated from E dimers. Acts as a chaperone for envelope protein E during intracellular virion assembly by masking and inactivating envelope protein E fusion peptide. prM is the only viral peptide matured by host furin in the trans-Golgi network probably to avoid catastrophic activation of the viral fusion activity in acidic Golgi compartment prior to virion release. prM-E cleavage is inefficient, and many virions are only partially matured. These uncleaved prM would play a role in immune evasion. Its function is as follows. May play a role in virus budding. Exerts cytotoxic effects by activating a mitochondrial apoptotic pathway through M ectodomain. May display a viroporin activity. In terms of biological role, binds to host cell surface receptor and mediates fusion between viral and cellular membranes. Envelope protein is synthesized in the endoplasmic reticulum in the form of heterodimer with protein prM. They play a role in virion budding in the ER, and the newly formed immature particle is covered with 60 spikes composed of heterodimer between precursor prM and envelope protein E. The virion is transported to the Golgi apparatus where the low pH causes dissociation of PrM-E heterodimers and formation of E homodimers. prM-E cleavage is inefficient, and many virions are only partially matured. These uncleaved prM would play a role in immune evasion. Functionally, involved in immune evasion, pathogenesis and viral replication. Once cleaved off the polyprotein, is targeted to three destinations: the viral replication cycle, the plasma membrane and the extracellular compartment. Essential for viral replication. Required for formation of the replication complex and recruitment of other non-structural proteins to the ER-derived membrane structures. Excreted as a hexameric lipoparticle that plays a role against host immune response. Antagonizing the complement function. Binds to the host macrophages and dendritic cells. Inhibits signal transduction originating from Toll-like receptor 3 (TLR3). Disrupts the host endothelial glycocalyx layer of host pulmonary microvascular endothelial cells, inducing degradation of sialic acid and shedding of heparan sulfate proteoglycans. NS1 induces expression of sialidases, heparanase, and activates cathepsin L, which activates heparanase via enzymatic cleavage. These effects are probably linked to the endothelial hyperpermeability observed in severe dengue disease. Its function is as follows. Component of the viral RNA replication complex that functions in virion assembly and antagonizes the host immune response. In terms of biological role, required cofactor for the serine protease function of NS3. May have membrane-destabilizing activity and form viroporins. Functionally, displays three enzymatic activities: serine protease, NTPase and RNA helicase. NS3 serine protease, in association with NS2B, performs its autocleavage and cleaves the polyprotein at dibasic sites in the cytoplasm: C-prM, NS2A-NS2B, NS2B-NS3, NS3-NS4A, NS4A-2K and NS4B-NS5. NS3 RNA helicase binds RNA and unwinds dsRNA in the 3' to 5' direction. Regulates the ATPase activity of the NS3 helicase activity. NS4A allows NS3 helicase to conserve energy during unwinding. Plays a role in the inhibition of the host innate immune response. Interacts with host MAVS and thereby prevents the interaction between RIGI and MAVS. In turn, IFN-beta production is impaired. Interacts with host AUP1 which mediates induction of lipophagy in host cells and facilitates production of virus progeny particles. Its function is as follows. Functions as a signal peptide for NS4B and is required for the interferon antagonism activity of the latter. In terms of biological role, induces the formation of ER-derived membrane vesicles where the viral replication takes place. Inhibits interferon (IFN)-induced host STAT1 phosphorylation and nuclear translocation, thereby preventing the establishment of cellular antiviral state by blocking the IFN-alpha/beta pathway. Functionally, replicates the viral (+) and (-) RNA genome, and performs the capping of genomes in the cytoplasm. NS5 methylates viral RNA cap at guanine N-7 and ribose 2'-O positions. Besides its role in RNA genome replication, also prevents the establishment of cellular antiviral state by blocking the interferon-alpha/beta (IFN-alpha/beta) signaling pathway. Inhibits host TYK2 and STAT2 phosphorylation, thereby preventing activation of JAK-STAT signaling pathway. The polypeptide is Genome polyprotein (Dengue virus type 3 (strain China/80-2/1980) (DENV-3)).